A 387-amino-acid chain; its full sequence is Succinate--CoA ligase [ADP-forming] subunit beta (387 aa).

The 228-residue stretch at 9-236 (KGLFAKHNVP…RAATDPLELK (228 aa)) folds into the ATP-grasp domain. ATP-binding positions include K45, 52–54 (GRG), S94, and E99. Mg(2+)-binding residues include N191 and D205. Residues N256 and 318–320 (GIT) contribute to the substrate site.

This sequence belongs to the succinate/malate CoA ligase beta subunit family. As to quaternary structure, heterotetramer of two alpha and two beta subunits. Mg(2+) is required as a cofactor.

The enzyme catalyses succinate + ATP + CoA = succinyl-CoA + ADP + phosphate. It carries out the reaction GTP + succinate + CoA = succinyl-CoA + GDP + phosphate. It functions in the pathway carbohydrate metabolism; tricarboxylic acid cycle; succinate from succinyl-CoA (ligase route): step 1/1. Its function is as follows. Succinyl-CoA synthetase functions in the citric acid cycle (TCA), coupling the hydrolysis of succinyl-CoA to the synthesis of either ATP or GTP and thus represents the only step of substrate-level phosphorylation in the TCA. The beta subunit provides nucleotide specificity of the enzyme and binds the substrate succinate, while the binding sites for coenzyme A and phosphate are found in the alpha subunit. The chain is Succinate--CoA ligase [ADP-forming] subunit beta from Mycobacterium ulcerans (strain Agy99).